We begin with the raw amino-acid sequence, 303 residues long: Ornithine carbamoyltransferase (303 aa).

Carbamoyl phosphate contacts are provided by residues 52-55 (STRT), Gln-79, Arg-103, and 130-133 (HPCQ). L-ornithine-binding positions include Asn-161, Asp-222, and 226–227 (SM). Carbamoyl phosphate is bound by residues 262–263 (CL) and Arg-290.

Belongs to the aspartate/ornithine carbamoyltransferase superfamily. OTCase family.

The protein localises to the cytoplasm. The enzyme catalyses carbamoyl phosphate + L-ornithine = L-citrulline + phosphate + H(+). It participates in amino-acid biosynthesis; L-arginine biosynthesis; L-arginine from L-ornithine and carbamoyl phosphate: step 1/3. Its function is as follows. Reversibly catalyzes the transfer of the carbamoyl group from carbamoyl phosphate (CP) to the N(epsilon) atom of ornithine (ORN) to produce L-citrulline. The sequence is that of Ornithine carbamoyltransferase from Geobacter metallireducens (strain ATCC 53774 / DSM 7210 / GS-15).